The chain runs to 206 residues: MNNIYQEDLGLQQYTKVFEDMLEFTSTRTPETNDEIWLVEHPAVFTQGKHGKPEHILNSHNIPIVATDRGGQVTYHGPGQAVIYFLLDIKRNKLGAKKLVTTVEQACINMLDKYYNLKAHIIDGAHGIYINNQKIASLGLRIKQGKSYHGIAINTNMDLTPFSYINPCGYSGLKMCQLANFYQEADIKKVQQQYTAEFVTLLNNSI.

Residues 30 to 206 form the BPL/LPL catalytic domain; sequence PETNDEIWLV…EFVTLLNNSI (177 aa). Residues 69–76, 137–139, and 150–152 each bind substrate; these read RGGQVTYH, SLG, and GIA. C168 serves as the catalytic Acyl-thioester intermediate.

It belongs to the LipB family.

The protein localises to the cytoplasm. The catalysed reaction is octanoyl-[ACP] + L-lysyl-[protein] = N(6)-octanoyl-L-lysyl-[protein] + holo-[ACP] + H(+). It participates in protein modification; protein lipoylation via endogenous pathway; protein N(6)-(lipoyl)lysine from octanoyl-[acyl-carrier-protein]: step 1/2. Its function is as follows. Catalyzes the transfer of endogenously produced octanoic acid from octanoyl-acyl-carrier-protein onto the lipoyl domains of lipoate-dependent enzymes. Lipoyl-ACP can also act as a substrate although octanoyl-ACP is likely to be the physiological substrate. The protein is Octanoyltransferase of Francisella tularensis subsp. mediasiatica (strain FSC147).